The following is a 326-amino-acid chain: N-(2-amino-2-carboxyethyl)-L-glutamate synthase (326 aa).

At Lys-47 the chain carries N6-(pyridoxal phosphate)lysine. Residues Asn-77, 185 to 189, and Ser-272 contribute to the pyridoxal 5'-phosphate site; that span reads STTGS.

The protein belongs to the cysteine synthase/cystathionine beta-synthase family. SbnA subfamily. In terms of assembly, homodimer. It depends on pyridoxal 5'-phosphate as a cofactor.

The catalysed reaction is O-phospho-L-serine + L-glutamate = N-[(2S)-2-amino-2-carboxyethyl]-L-glutamate + phosphate + H(+). It participates in siderophore biosynthesis. Functionally, catalyzes the synthesis of N-((2S)-2-amino-2-carboxyethyl)-L-glutamate (ACEGA) from O-phospho-L-serine and L-glutamate. Involved in the biosynthesis of L-2,3-diaminopropionic acid (L-Dap), a precursor of staphyloferrin B and antibiotics. This Staphylococcus aureus (strain N315) protein is N-(2-amino-2-carboxyethyl)-L-glutamate synthase (sbnA).